We begin with the raw amino-acid sequence, 508 residues long: Probable polyol transporter 3 (508 aa).

12 helical membrane passes run 21–41 (FAFG…YDTG), 60–80 (QIEV…LTAG), 90–110 (YTIA…GYGP), 120–140 (CIAG…SAEI), 147–167 (GFLT…GYVS), 178–198 (LGWR…AFGI), 280–300 (ILIA…EAVV), 318–338 (LLLA…IATF), 348–368 (LLLT…VSLT), 384–404 (IVST…ITWV), 418–438 (GASI…MSFL), and 448–468 (GVFF…FFML).

Belongs to the major facilitator superfamily. Sugar transporter (TC 2.A.1.1) family.

It localises to the membrane. Plasma membrane sugar-proton symporter. In Arabidopsis thaliana (Mouse-ear cress), this protein is Probable polyol transporter 3 (PLT3).